The sequence spans 209 residues: NADH-ubiquinone oxidoreductase subunit 9 (209 aa).

Belongs to the complex I 30 kDa subunit family. Complex I is composed of about 30 different subunits.

Its subcellular location is the mitochondrion inner membrane. It carries out the reaction a ubiquinone + NADH + 5 H(+)(in) = a ubiquinol + NAD(+) + 4 H(+)(out). Functionally, core subunit of the mitochondrial membrane respiratory chain NADH dehydrogenase (Complex I) that is believed to belong to the minimal assembly required for catalysis. Complex I functions in the transfer of electrons from NADH to the respiratory chain. The immediate electron acceptor for the enzyme is believed to be ubiquinone. The sequence is that of NADH-ubiquinone oxidoreductase subunit 9 (nad9) from Dictyostelium citrinum (Slime mold).